We begin with the raw amino-acid sequence, 779 residues long: Polyribonucleotide nucleotidyltransferase (779 aa).

Positions 490 and 496 each coordinate Mg(2+). A KH domain is found at 557–618 (PHILSLKINP…EAVKARIEAV (62 aa)). An S1 motif domain is found at 625–693 (GEEFEGTVVK…DRGKIDLIRP (69 aa)). Basic and acidic residues predominate over residues 699–752 (VPLREPRAPRGGDRGPRRDSDRGGDRGPRREFSDRGPRPEGARSERPEGQRTER). The segment at 699–779 (VPLREPRAPR…AAPVFPRRED (81 aa)) is disordered. Over residues 757-767 (PATQESSQSSD) the composition is skewed to polar residues.

The protein belongs to the polyribonucleotide nucleotidyltransferase family. Mg(2+) serves as cofactor.

It is found in the cytoplasm. The catalysed reaction is RNA(n+1) + phosphate = RNA(n) + a ribonucleoside 5'-diphosphate. Involved in mRNA degradation. Catalyzes the phosphorolysis of single-stranded polyribonucleotides processively in the 3'- to 5'-direction. This is Polyribonucleotide nucleotidyltransferase from Deinococcus radiodurans (strain ATCC 13939 / DSM 20539 / JCM 16871 / CCUG 27074 / LMG 4051 / NBRC 15346 / NCIMB 9279 / VKM B-1422 / R1).